We begin with the raw amino-acid sequence, 393 residues long: Lysine/ornithine decarboxylase (393 aa).

K51 carries the post-translational modification N6-(pyridoxal phosphate)lysine. C323 (proton donor; shared with dimeric partner) is an active-site residue.

Belongs to the Orn/Lys/Arg decarboxylase class-II family. As to quaternary structure, homodimer. The cofactor is pyridoxal 5'-phosphate.

The enzyme catalyses L-lysine + H(+) = cadaverine + CO2. It catalyses the reaction L-ornithine + H(+) = putrescine + CO2. Its pathway is amine and polyamine biosynthesis; putrescine biosynthesis via L-ornithine pathway; putrescine from L-ornithine: step 1/1. Its activity is regulated as follows. Inhibited competitively by both alpha-difluoromethyllysine and alpha-difluoromethylornithine. Its function is as follows. Decarboxylates both L-lysine and L-ornithine with similar catalytic efficiency. In Selenomonas ruminantium, this protein is Lysine/ornithine decarboxylase (ldc).